We begin with the raw amino-acid sequence, 432 residues long: Succinate--CoA ligase [GDP-forming] subunit beta, mitochondrial (432 aa).

Residues 1–37 (MAAPVGAQARKLLRDLVLRPPLLAARSQVVQLTSRRW) constitute a mitochondrion transit peptide. The ATP-grasp domain occupies 46–274 (KKLMSDNGVK…NAEFRQKDIF (229 aa)). Gln-57 provides a ligand contact to GTP. N6-acetyllysine is present on Lys-73. Lys-78 carries the N6-succinyllysine modification. Position 90 to 92 (90 to 92 (GRG)) interacts with GTP. Lys-111, Lys-132, and Lys-139 each carry N6-acetyllysine. Leu-146 is a binding site for GTP. Ser-161 is subject to Phosphoserine. Residues Lys-200, Lys-218, and Lys-227 each carry the N6-acetyllysine modification. 2 residues coordinate Mg(2+): Asn-243 and Asp-257. Lys-271 carries the post-translational modification N6-acetyllysine. Asn-308 contributes to the substrate binding site. Lys-338 is modified (N6-succinyllysine). Lys-347 is subject to N6-acetyllysine. 365–367 (GIV) is a substrate binding site. Lys-386 and Lys-423 each carry N6-acetyllysine.

This sequence belongs to the succinate/malate CoA ligase beta subunit family. GTP-specific subunit beta subfamily. Heterodimer of an alpha and a beta subunit. The beta subunit determines specificity for GTP. Mg(2+) serves as cofactor.

The protein resides in the mitochondrion. The enzyme catalyses GTP + succinate + CoA = succinyl-CoA + GDP + phosphate. Its pathway is carbohydrate metabolism; tricarboxylic acid cycle; succinate from succinyl-CoA (ligase route): step 1/1. In terms of biological role, GTP-specific succinyl-CoA synthetase functions in the citric acid cycle (TCA), coupling the hydrolysis of succinyl-CoA to the synthesis of GTP and thus represents the only step of substrate-level phosphorylation in the TCA. The beta subunit provides nucleotide specificity of the enzyme and binds the substrate succinate, while the binding sites for coenzyme A and phosphate are found in the alpha subunit. This chain is Succinate--CoA ligase [GDP-forming] subunit beta, mitochondrial, found in Bos taurus (Bovine).